The primary structure comprises 442 residues: Phosphatidylserine synthase 2 (442 aa).

Topologically, residues 1 to 40 are cytoplasmic; the sequence is MRRGERRGPAGPLGDGPALGLRRSTESEVYDDGTNTFFWR. Residues 41–61 traverse the membrane as a helical segment; that stretch reads AHTLTVLFILTCALGYVTLLE. The Lumenal segment spans residues 62–74; that stretch reads ETPQDTAYNTKRG. Residues 75 to 95 form a helical membrane-spanning segment; sequence IVASILVFLCFGVTQAKDGPF. Topologically, residues 96-104 are cytoplasmic; it reads SRPHPAYWR. A helical transmembrane segment spans residues 105–125; that stretch reads FWLCVSVVYELFLIFILFQTV. Over 126-291 the chain is Lumenal; it reads QDGRQFMKYI…EWKPASSLRR (166 aa). N159 and N215 each carry an N-linked (GlcNAc...) asparagine glycan. The helical transmembrane segment at 292–312 threads the bilayer; the sequence is WLAVCGIIFVFLLAELNTFYL. K313 is a topological domain (cytoplasmic). A helical membrane pass occupies residues 314–334; it reads FVLWMPPEHYLVLLRLVFFVN. Topologically, residues 335–354 are lumenal; the sequence is VGGVAMREIYDFMDDPKFHK. The chain crosses the membrane as a helical span at residues 355–375; sequence KLGQQAWLVAAITATEFLIVV. At 376–381 the chain is on the cytoplasmic side; it reads KYDPYT. Residues 382–402 form a helical membrane-spanning segment; the sequence is LTLSLPFYITQCWILGIILVL. The Lumenal segment spans residues 403 to 442; it reads TWTAWRFFIRDITLRYKEIRRQKQEHKYEKDKCLSNGDGH.

Belongs to the phosphatidyl serine synthase family.

It localises to the endoplasmic reticulum membrane. It catalyses the reaction a 1,2-diacyl-sn-glycero-3-phosphoethanolamine + L-serine = a 1,2-diacyl-sn-glycero-3-phospho-L-serine + ethanolamine. The catalysed reaction is 1-hexadecanoyl-2-(9Z-octadecenoyl)-sn-glycero-3-phosphoethanolamine + L-serine = 1-hexadecanoyl-2-(9Z-octadecenoyl)-sn-glycero-3-phospho-L-serine + ethanolamine. The enzyme catalyses 1-hexadecanoyl-2-(4Z,7Z,10Z,13Z,16Z,19Z-docosahexaenoyl)-sn-glycero-3-phosphoethanolamine + L-serine = 1-hexadecanoyl-2-(4Z,7Z,10Z,13Z,16Z,19Z-docosahexaenoyl)-sn-glycero-3-phosphoserine + ethanolamine. It carries out the reaction 1-octadecanoyl-2-(5Z,8Z,11Z,14Z)-eicosatetraenoyl-sn-glycero-3-phosphoethanolamine + L-serine = 1-octadecanoyl-2-(5Z,8Z,11Z,14Z)-eicosatetraenoyl-sn-glycero-3-phosphoserine + ethanolamine. It catalyses the reaction 1-octadecanoyl-2-(4Z,7Z,10Z,13Z,16Z,19Z-docosahexaenoyl)-sn-glycero-3-phosphoethanolamine + L-serine = 1-octadecanoyl-2-(4Z,7Z,10Z,13Z,16Z,19Z-docosahexaenoyl)-sn-glycero-3-phosphoserine + ethanolamine. The catalysed reaction is 1-(1Z-octadecenyl)-2-(4Z,7Z,10Z,13Z,16Z,19Z-docosahexaenoyl)-sn-glycero-3-phosphoethanolamine + L-serine = 1-(1Z-octadecenyl)-2-(4Z,7Z,10Z,13Z,16Z,19Z-docosahexaenoyl)-sn-glycero-3-phospho-L-serine + ethanolamine. The enzyme catalyses 1-octadecanoyl-2-(9Z-octadecenoyl)-sn-glycero-3-phosphoethanolamine + L-serine = 1-octadecanoyl-2-(9Z-octadecenoyl)-sn-glycero-3-phospho-L-serine + ethanolamine. It carries out the reaction 1-(1Z-octadecenyl)-2-(9Z-octadecenoyl)-sn-glycero-3-phosphoethanolamine + L-serine = 1-(1Z-octadecenyl)-2-(9Z-octadecenoyl)-sn-glycero-3-phospho-L-serine + ethanolamine. It catalyses the reaction 1-(1Z-octadecenyl)-2-(5Z,8Z,11Z,14Z- eicosatetraenoyl)-sn-glycero-3-phosphoethanolamine + L-serine = 1-(1Z-octadecenyl)-2-(5Z,8Z,11Z,14Z-eicosatetraenoyl)-sn-glycero-3-phospho-L-serine + ethanolamine. It functions in the pathway phospholipid metabolism; phosphatidylserine biosynthesis. Its function is as follows. Catalyzes a base-exchange reaction in which the polar head group of phosphatidylethanolamine (PE) or phosphatidylcholine (PC) is replaced by L-serine. Catalyzes the conversion of phosphatatidylethanolamine and does not act on phosphatidylcholine. Can utilize both phosphatidylethanolamine (PE) plasmalogen and diacyl PE as substrate and the latter is six times better utilized, indicating the importance of an ester linkage at the sn-1 position. Although it shows no sn-1 fatty acyl preference, exhibits significant preference towards docosahexaenoic acid (22:6n-3) compared with 18:1 or 20:4 at the sn-2 position. This is Phosphatidylserine synthase 2 (PTDSS1) from Gallus gallus (Chicken).